Here is a 96-residue protein sequence, read N- to C-terminus: Co-chaperonin GroES (96 aa).

This sequence belongs to the GroES chaperonin family. As to quaternary structure, heptamer of 7 subunits arranged in a ring. Interacts with the chaperonin GroEL.

Its subcellular location is the cytoplasm. In terms of biological role, together with the chaperonin GroEL, plays an essential role in assisting protein folding. The GroEL-GroES system forms a nano-cage that allows encapsulation of the non-native substrate proteins and provides a physical environment optimized to promote and accelerate protein folding. GroES binds to the apical surface of the GroEL ring, thereby capping the opening of the GroEL channel. This is Co-chaperonin GroES from Idiomarina loihiensis (strain ATCC BAA-735 / DSM 15497 / L2-TR).